We begin with the raw amino-acid sequence, 302 residues long: ATP synthase subunit a (302 aa).

A run of 7 helical transmembrane segments spans residues Val61–Gly81, Ile119–Ile139, Phe148–Val168, Asp172–Ile192, Pro214–Ala234, Phe252–Trp272, and Ala273–Val293.

It belongs to the ATPase A chain family. As to quaternary structure, F-type ATPases have 2 components, CF(1) - the catalytic core - and CF(0) - the membrane proton channel. CF(1) has five subunits: alpha(3), beta(3), gamma(1), delta(1), epsilon(1). CF(0) has three main subunits: a(1), b(2) and c(9-12). The alpha and beta chains form an alternating ring which encloses part of the gamma chain. CF(1) is attached to CF(0) by a central stalk formed by the gamma and epsilon chains, while a peripheral stalk is formed by the delta and b chains.

The protein localises to the cell inner membrane. Key component of the proton channel; it plays a direct role in the translocation of protons across the membrane. The sequence is that of ATP synthase subunit a from Alcanivorax borkumensis (strain ATCC 700651 / DSM 11573 / NCIMB 13689 / SK2).